Reading from the N-terminus, the 360-residue chain is Cannabinoid receptor 2 (360 aa).

Residues 1-33 (MAGCRELELTNGSNGGLEFNPMKEYMILSDAQQ) are Extracellular-facing. Asn-11 carries N-linked (GlcNAc...) asparagine glycosylation. The chain crosses the membrane as a helical span at residues 34–59 (IAVAVLCTLMGLLSALENVAVLYLIL). The Cytoplasmic portion of the chain corresponds to 60-71 (SSQRLRRKPSYL). A helical transmembrane segment spans residues 72–92 (FIGSLAGADFLASVIFACNFV). Topologically, residues 93–104 (IFHVFHGVDSRN) are extracellular. A helical transmembrane segment spans residues 105-129 (IFLLKIGSVTMTFTASVGSLLLTAV). Topologically, residues 130–149 (DRYLCLCYPPTYKALVTRGR) are cytoplasmic. Residues 150–172 (ALVALGVMWVLSALISYLPLMGW) form a helical membrane-spanning segment. The Extracellular segment spans residues 173 to 188 (TCCPSPCSELFPLIPN). A helical transmembrane segment spans residues 189 to 214 (DYLLGWLLFIAILFSGIIYTYGYVLW). Over 215–246 (KAHQHVASLAEHQDRQVPGIARMRLDVRLAKT) the chain is Cytoplasmic. The helical transmembrane segment at 247–267 (LGLVMAVLLICWFPALALMGH) threads the bilayer. Residues 268 to 279 (SLVTTLSDKVKE) are Extracellular-facing. A helical transmembrane segment spans residues 280-301 (AFAFCSMLCLVNSMINPIIYAL). The Cytoplasmic segment spans residues 302 to 360 (RSGEIRSAAQHCLTGWKKYLQGLGSEGKEEAPKSSVTETEAEVKTTTGPGSRTPGCSNC). Residues 327 to 360 (EGKEEAPKSSVTETEAEVKTTTGPGSRTPGCSNC) form a disordered region. Residues Ser-335 and Ser-336 each carry the phosphoserine modification. Thr-338 is modified (phosphothreonine). Positions 349–360 (GPGSRTPGCSNC) are enriched in polar residues. Ser-352 bears the Phosphoserine mark.

This sequence belongs to the G-protein coupled receptor 1 family. In terms of processing, constitutively phosphorylated on Ser-352; phosphorylation increases cell internalization and desensitizes the receptor. As to expression, expressed in spleen and brain by neurons and glial cells (at protein level). Expressed in lung, testis and thymus but not in heart, liver or kidney. Expressed in cerebellum, cortex and brainstem.

The protein resides in the cell membrane. It is found in the cell projection. Its subcellular location is the dendrite. The protein localises to the perikaryon. Heterotrimeric G protein-coupled receptor for endocannabinoid 2-arachidonoylglycerol mediating inhibition of adenylate cyclase. May function in inflammatory response, nociceptive transmission and bone homeostasis. In Rattus norvegicus (Rat), this protein is Cannabinoid receptor 2 (Cnr2).